Here is a 241-residue protein sequence, read N- to C-terminus: MADS-box transcription factor 57 (241 aa).

The MADS-box domain occupies 1–61; the sequence is MGRGKIVIRR…GRLYEFSSTN (61 aa). A K-box domain is found at 85 to 178; it reads IKIWQREAAS…LNVMSQQKLE (94 aa). A disordered region spans residues 216-241; the sequence is LELSQSQQREGECSKTAAPELGLHLP.

In terms of assembly, interacts with TB1. In terms of tissue distribution, expressed in seedling roots and shoots. Highly expressed in young leaves.

The protein resides in the nucleus. In terms of biological role, transcriptional factor that targets the CArG motif 5'-C(A/T)TTAAAAAG-3' in the promoter of D14. Directly suppresses D14 expression to control the outgrowth of axillary buds. The sequence is that of MADS-box transcription factor 57 from Oryza sativa subsp. japonica (Rice).